The sequence spans 354 residues: Isopentenyl-diphosphate delta-isomerase (354 aa).

11–12 is a substrate binding site; that stretch reads KK. FMN contacts are provided by residues Ser-67, 68-70, Ser-98, and Asn-126; that span reads SMT. A substrate-binding site is contributed by 98–100; that stretch reads SFK. Substrate is bound at residue Gln-160. Glu-161 is a binding site for Mg(2+). FMN is bound by residues Lys-192, Thr-222, and 289 to 290; that span reads AA.

Belongs to the IPP isomerase type 2 family. In terms of assembly, homooctamer. Dimer of tetramers. Requires FMN as cofactor. NADPH serves as cofactor. It depends on Mg(2+) as a cofactor.

The protein resides in the cytoplasm. It catalyses the reaction isopentenyl diphosphate = dimethylallyl diphosphate. Involved in the biosynthesis of isoprenoids. Catalyzes the 1,3-allylic rearrangement of the homoallylic substrate isopentenyl (IPP) to its allylic isomer, dimethylallyl diphosphate (DMAPP). This chain is Isopentenyl-diphosphate delta-isomerase, found in Borreliella afzelii (strain PKo) (Borrelia afzelii).